The primary structure comprises 318 residues: WRKY transcription factor 28 (318 aa).

2 stretches are compositionally biased toward polar residues: residues 74 to 84 (SSEVFNSSIDQ) and 106 to 115 (RVSPSNSSSS). The interval 74-158 (SSEVFNSSID…KTEVKKQREP (85 aa)) is disordered. 2 stretches are compositionally biased toward basic and acidic residues: residues 116–126 (EADHPGEDSGK) and 148–158 (KKTEVKKQREP). Residues 166-231 (SEVDHLEDGY…YEGQHNHPIP (66 aa)) constitute a DNA-binding region (WRKY).

Belongs to the WRKY group II-c family.

It is found in the nucleus. Functionally, transcription factor. Interacts specifically with the W box (5'-(T)TGAC[CT]-3'), a frequently occurring elicitor-responsive cis-acting element. This Arabidopsis thaliana (Mouse-ear cress) protein is WRKY transcription factor 28 (WRKY28).